A 406-amino-acid polypeptide reads, in one-letter code: Kelch domain-containing protein 1 (406 aa).

Kelch repeat units follow at residues 24–76, 80–134, 135–181, 208–258, 260–307, and 311–361; these read FLYV…CGAC, KLYI…VYKD, RLIY…TKTQ, KGYI…PIAD, KLFL…ACLG, and EIMV…LESQ.

In terms of assembly, component of a CRL5 E3 ubiquitin-protein ligase complex, also named ECS (Elongin BC-CUL2/5-SOCS-box protein) complex, composed of CUL5, Elongin BC (ELOB and ELOC), RBX1 and substrate-specific adapter KLHDC1. As to expression, widely expressed, with high levels in skeletal muscle, pancreas and liver. Undetectable in peripheral blood leukocytes.

It localises to the cytoplasm. The protein localises to the cytosol. It functions in the pathway protein modification; protein ubiquitination. Substrate-recognition component of a Cul5-RING (CRL5) E3 ubiquitin-protein ligase complex of the DesCEND (destruction via C-end degrons) pathway, which recognizes a C-degron located at the extreme C terminus of target proteins, leading to their ubiquitination and degradation. The C-degron recognized by the DesCEND pathway is usually a motif of less than ten residues and can be present in full-length proteins, truncated proteins or proteolytically cleaved forms. The CRL5(KLHDC1) complex mediates ubiquitination and degradation of truncated SELENOS selenoprotein produced by failed UGA/Sec decoding, which ends with a glycine. This Homo sapiens (Human) protein is Kelch domain-containing protein 1.